Consider the following 242-residue polypeptide: HTH domain-truncated transcriptional regulator QseD (242 aa).

It belongs to the LysR transcriptional regulatory family.

Its function is as follows. Represses EHEC virulence expression. Down-regulates expression of LEE (locus of enterocyte effacement) and iraD genes, and alters AE (attaching and effacing) lesion formation. May regulate transcription through interactions with another HTH DNA-binding protein. This Escherichia coli O157:H7 protein is HTH domain-truncated transcriptional regulator QseD (qseD).